Here is a 96-residue protein sequence, read N- to C-terminus: Co-chaperonin GroES (96 aa).

It belongs to the GroES chaperonin family. Heptamer of 7 subunits arranged in a ring. Interacts with the chaperonin GroEL.

Its subcellular location is the cytoplasm. In terms of biological role, together with the chaperonin GroEL, plays an essential role in assisting protein folding. The GroEL-GroES system forms a nano-cage that allows encapsulation of the non-native substrate proteins and provides a physical environment optimized to promote and accelerate protein folding. GroES binds to the apical surface of the GroEL ring, thereby capping the opening of the GroEL channel. This Hyphomonas neptunium (strain ATCC 15444) protein is Co-chaperonin GroES.